The following is a 238-amino-acid chain: 1-(5-phosphoribosyl)-5-[(5-phosphoribosylamino)methylideneamino] imidazole-4-carboxamide isomerase (238 aa).

The active-site Proton acceptor is the aspartate 8. Residue aspartate 129 is the Proton donor of the active site.

Belongs to the HisA/HisF family.

The protein localises to the cytoplasm. It catalyses the reaction 1-(5-phospho-beta-D-ribosyl)-5-[(5-phospho-beta-D-ribosylamino)methylideneamino]imidazole-4-carboxamide = 5-[(5-phospho-1-deoxy-D-ribulos-1-ylimino)methylamino]-1-(5-phospho-beta-D-ribosyl)imidazole-4-carboxamide. The protein operates within amino-acid biosynthesis; L-histidine biosynthesis; L-histidine from 5-phospho-alpha-D-ribose 1-diphosphate: step 4/9. The sequence is that of 1-(5-phosphoribosyl)-5-[(5-phosphoribosylamino)methylideneamino] imidazole-4-carboxamide isomerase from Lacticaseibacillus casei (strain BL23) (Lactobacillus casei).